The following is a 330-amino-acid chain: Malate dehydrogenase (330 aa).

NAD(+) is bound at residue 12 to 18 (GAAGQIG). Arg-93 and Arg-99 together coordinate substrate. NAD(+) contacts are provided by residues Asn-106, Gln-113, and 130-132 (VGN). The substrate site is built by Asn-132 and Arg-163. His-188 functions as the Proton acceptor in the catalytic mechanism.

Belongs to the LDH/MDH superfamily. MDH type 2 family.

It catalyses the reaction (S)-malate + NAD(+) = oxaloacetate + NADH + H(+). In terms of biological role, catalyzes the reversible oxidation of malate to oxaloacetate. The sequence is that of Malate dehydrogenase from Thermobifida fusca (strain YX).